The sequence spans 534 residues: GMP synthase [glutamine-hydrolyzing] (534 aa).

The Glutamine amidotransferase type-1 domain maps to 20–210; the sequence is MLIILDFGSQ…VYHICDCEPT (191 aa). Cys97 functions as the Nucleophile in the catalytic mechanism. Catalysis depends on residues His184 and Glu186. The GMPS ATP-PPase domain occupies 211–409; that stretch reads WTTETFVEEA…LGLPEEIVKR (199 aa). 238 to 244 contributes to the ATP binding site; it reads SGGVDSS.

In terms of assembly, homodimer.

It carries out the reaction XMP + L-glutamine + ATP + H2O = GMP + L-glutamate + AMP + diphosphate + 2 H(+). It functions in the pathway purine metabolism; GMP biosynthesis; GMP from XMP (L-Gln route): step 1/1. Its function is as follows. Catalyzes the synthesis of GMP from XMP. This is GMP synthase [glutamine-hydrolyzing] from Synechococcus sp. (strain ATCC 27144 / PCC 6301 / SAUG 1402/1) (Anacystis nidulans).